The following is a 419-amino-acid chain: Adenylosuccinate synthetase 1 (419 aa).

G11–K17 contacts GTP. The active-site Proton acceptor is the D12. Residues D12 and G39 each contribute to the Mg(2+) site. IMP is bound by residues D12–K15, N37–H40, R138, Q220, and R298. H40 serves as the catalytic Proton donor. Residue T294 to R300 coordinates substrate. GTP-binding positions include R300, N326 to D328, and S407 to G409.

This sequence belongs to the adenylosuccinate synthetase family. In terms of assembly, homodimer. Mg(2+) serves as cofactor.

The protein resides in the cytoplasm. It carries out the reaction IMP + L-aspartate + GTP = N(6)-(1,2-dicarboxyethyl)-AMP + GDP + phosphate + 2 H(+). The protein operates within purine metabolism; AMP biosynthesis via de novo pathway; AMP from IMP: step 1/2. In terms of biological role, plays an important role in the de novo pathway of purine nucleotide biosynthesis. Catalyzes the first committed step in the biosynthesis of AMP from IMP. The chain is Adenylosuccinate synthetase 1 from Photorhabdus laumondii subsp. laumondii (strain DSM 15139 / CIP 105565 / TT01) (Photorhabdus luminescens subsp. laumondii).